The chain runs to 386 residues: Phosphomevalonate dehydratase large subunit (386 aa).

7 residues coordinate (R)-5-phosphomevalonate: G48, V49, S50, N53, R63, N79, and P80. Residue C110 participates in [4Fe-4S] cluster binding. (R)-5-phosphomevalonate contacts are provided by E129 and S130. Residues C283 and C342 each contribute to the [4Fe-4S] cluster site. A (R)-5-phosphomevalonate-binding site is contributed by K361.

This sequence belongs to the AcnX type II large subunit family. Heterodimer composed of a large subunit (PMDh-L) and a small subunit (PMDh-S). [4Fe-4S] cluster serves as cofactor.

The enzyme catalyses (R)-5-phosphomevalonate = (2E)-3-methyl-5-phosphooxypent-2-enoate + H2O. It participates in isoprenoid biosynthesis; isopentenyl diphosphate biosynthesis via mevalonate pathway. Component of a hydro-lyase that catalyzes the dehydration of mevalonate 5-phosphate (MVA5P) to form trans-anhydromevalonate 5-phosphate (tAHMP). Involved in the archaeal mevalonate (MVA) pathway, which provides fundamental precursors for isoprenoid biosynthesis, such as isopentenyl diphosphate (IPP) and dimethylallyl diphosphate (DMAPP). The protein is Phosphomevalonate dehydratase large subunit of Thermococcus kodakarensis (strain ATCC BAA-918 / JCM 12380 / KOD1) (Pyrococcus kodakaraensis (strain KOD1)).